A 157-amino-acid chain; its full sequence is Urease accessory protein UreE (157 aa).

It belongs to the UreE family.

The protein resides in the cytoplasm. In terms of biological role, involved in urease metallocenter assembly. Binds nickel. Probably functions as a nickel donor during metallocenter assembly. The chain is Urease accessory protein UreE from Paenarthrobacter aurescens (strain TC1).